The sequence spans 500 residues: Probable cytosol aminopeptidase (500 aa).

Positions 264 and 269 each coordinate Mn(2+). The active site involves Lys276. Mn(2+)-binding residues include Asp287, Asp346, and Glu348. Residue Arg350 is part of the active site.

Belongs to the peptidase M17 family. It depends on Mn(2+) as a cofactor.

The protein resides in the cytoplasm. The catalysed reaction is Release of an N-terminal amino acid, Xaa-|-Yaa-, in which Xaa is preferably Leu, but may be other amino acids including Pro although not Arg or Lys, and Yaa may be Pro. Amino acid amides and methyl esters are also readily hydrolyzed, but rates on arylamides are exceedingly low.. It carries out the reaction Release of an N-terminal amino acid, preferentially leucine, but not glutamic or aspartic acids.. Presumably involved in the processing and regular turnover of intracellular proteins. Catalyzes the removal of unsubstituted N-terminal amino acids from various peptides. The chain is Probable cytosol aminopeptidase from Rickettsia canadensis (strain McKiel).